The primary structure comprises 427 residues: Queuine tRNA-ribosyltransferase catalytic subunit (427 aa).

Catalysis depends on Asp99, which acts as the Proton acceptor. Residues 99-103, Asp153, Gln196, and Gly223 contribute to the substrate site; that span reads DSGGF. An RNA binding region spans residues 254–260; the sequence is GVGFAAD. Asp273 (nucleophile) is an active-site residue. The tract at residues 278-282 is RNA binding; important for wobble base 34 recognition; that stretch reads TRTAR. Zn(2+) contacts are provided by Cys311, Cys313, Cys316, and His341. Positions 395–427 are disordered; that stretch reads PADPERIDEQDQKPKTEKRRETEDVAEEQVASS. Positions 397–417 are enriched in basic and acidic residues; it reads DPERIDEQDQKPKTEKRRETE.

This sequence belongs to the queuine tRNA-ribosyltransferase family. Heterodimer of a catalytic subunit and an accessory subunit. Zn(2+) is required as a cofactor.

The protein resides in the cytoplasm. The catalysed reaction is guanosine(34) in tRNA + queuine = queuosine(34) in tRNA + guanine. In terms of biological role, catalytic subunit of the queuine tRNA-ribosyltransferase (TGT) that catalyzes the base-exchange of a guanine (G) residue with queuine (Q) at position 34 (anticodon wobble position) in tRNAs with GU(N) anticodons (tRNA-Asp, -Asn, -His and -Tyr), resulting in the hypermodified nucleoside queuosine (7-(((4,5-cis-dihydroxy-2-cyclopenten-1-yl)amino)methyl)-7-deazaguanosine). Catalysis occurs through a double-displacement mechanism. The nucleophile active site attacks the C1' of nucleotide 34 to detach the guanine base from the RNA, forming a covalent enzyme-RNA intermediate. The proton acceptor active site deprotonates the incoming queuine, allowing a nucleophilic attack on the C1' of the ribose to form the product. In Drosophila melanogaster (Fruit fly), this protein is Queuine tRNA-ribosyltransferase catalytic subunit (Tgt).